Here is a 128-residue protein sequence, read N- to C-terminus: Fluoride-specific ion channel FluC (128 aa).

4 helical membrane-spanning segments follow: residues 5 to 25 (IVAI…LSIG), 35 to 55 (LGTL…VVAF), 67 to 87 (LFVI…SVEV), and 96 to 116 (FGWA…LTGL). Na(+)-binding residues include Gly75 and Thr78.

The protein belongs to the fluoride channel Fluc/FEX (TC 1.A.43) family.

Its subcellular location is the cell inner membrane. It carries out the reaction fluoride(in) = fluoride(out). With respect to regulation, na(+) is not transported, but it plays an essential structural role and its presence is essential for fluoride channel function. In terms of biological role, fluoride-specific ion channel. Important for reducing fluoride concentration in the cell, thus reducing its toxicity. The chain is Fluoride-specific ion channel FluC from Burkholderia mallei (strain NCTC 10247).